A 598-amino-acid chain; its full sequence is Probable pectinesterase/pectinesterase inhibitor 34 (598 aa).

Residues 1–40 (MGYERLGPSGATGSVTTSTTTAPILNQVSTSEQPENNNRR) form a disordered region. Low complexity predominate over residues 7–23 (GPSGATGSVTTSTTTAP). Residues 24 to 36 (ILNQVSTSEQPEN) show a composition bias toward polar residues. The chain crosses the membrane as a helical span at residues 46 to 66 (VVSSIVLAISLILAAAIFAGV). A pectinesterase inhibitor 34 region spans residues 81-232 (RKPSQAISKA…SELVSNCLAI (152 aa)). The segment at 284 to 582 (DIIVSKDGNG…FTVAEFIYGS (299 aa)) is pectinesterase 34. Positions 360 and 390 each coordinate substrate. Catalysis depends on Asp-413, which acts as the Proton donor; for pectinesterase activity. Cysteines 427 and 447 form a disulfide. The active-site Nucleophile; for pectinesterase activity is Asp-434. Arg-502 and Trp-504 together coordinate substrate.

This sequence in the N-terminal section; belongs to the PMEI family. In the C-terminal section; belongs to the pectinesterase family. As to expression, expressed in siliques.

The protein localises to the membrane. The catalysed reaction is [(1-&gt;4)-alpha-D-galacturonosyl methyl ester](n) + n H2O = [(1-&gt;4)-alpha-D-galacturonosyl](n) + n methanol + n H(+). The protein operates within glycan metabolism; pectin degradation; 2-dehydro-3-deoxy-D-gluconate from pectin: step 1/5. Its function is as follows. Acts in the modification of cell walls via demethylesterification of cell wall pectin. In Arabidopsis thaliana (Mouse-ear cress), this protein is Probable pectinesterase/pectinesterase inhibitor 34 (PME34).